The chain runs to 356 residues: tRNA-specific 2-thiouridylase MnmA 1 (356 aa).

ATP-binding positions include G8 to S15 and M34. Catalysis depends on C103, which acts as the Nucleophile. C103 and C199 are disulfide-bonded. G127 serves as a coordination point for ATP. The interval K149–Q151 is interaction with tRNA. Residue C199 is the Cysteine persulfide intermediate of the active site. Positions R305–Y306 are interaction with tRNA.

The protein belongs to the MnmA/TRMU family.

It is found in the cytoplasm. The enzyme catalyses S-sulfanyl-L-cysteinyl-[protein] + uridine(34) in tRNA + AH2 + ATP = 2-thiouridine(34) in tRNA + L-cysteinyl-[protein] + A + AMP + diphosphate + H(+). Functionally, catalyzes the 2-thiolation of uridine at the wobble position (U34) of tRNA, leading to the formation of s(2)U34. This Clostridium botulinum (strain Loch Maree / Type A3) protein is tRNA-specific 2-thiouridylase MnmA 1.